Here is a 370-residue protein sequence, read N- to C-terminus: MTNMNVDATQLTTKPSQDGFSMPAEWAQQQAVWMIWPYRPDNWRSAGAYAQATFAKVADAIGAVTPVYMGVPKAFLAQAKTVMPAHVTLVEIDSNDCWARDTGPTVVVNAKGECRGVDWGFNAWGGDNGGLYSPWDKDELVAQKMLTQHGFDRYQAPLILEGGSIHVDGEGTCMTTAECLLNSNRNPDLTREQIEALLAEYLNVKQFIWLPDGVYMDETDGHIDNLCCFARPGEVVLHWTDDQSDPQYPRSKAALDILQNTVDAQGRKLTVHLIPQPGPLYCTEEEAQGVAEGTGVPRTAGERLAGSYANFLITNNRIVFPLLDPVTDDIAAQKLQEIFPEYEIVGVPAREILLGGGNIHCITQQIPSGK.

The span at 1–19 shows a compositional bias: polar residues; that stretch reads MTNMNVDATQLTTKPSQDG. The tract at residues 1–20 is disordered; sequence MTNMNVDATQLTTKPSQDGF. Residue Cys-361 is the Amidino-cysteine intermediate of the active site.

It belongs to the agmatine deiminase family.

It carries out the reaction agmatine + H2O = N-carbamoylputrescine + NH4(+). The chain is Putative agmatine deiminase from Shewanella frigidimarina (strain NCIMB 400).